The sequence spans 346 residues: Protein RecA (346 aa).

Residue 79-86 (GPESSGKT) coordinates ATP.

It belongs to the RecA family.

The protein resides in the cytoplasm. Functionally, can catalyze the hydrolysis of ATP in the presence of single-stranded DNA, the ATP-dependent uptake of single-stranded DNA by duplex DNA, and the ATP-dependent hybridization of homologous single-stranded DNAs. It interacts with LexA causing its activation and leading to its autocatalytic cleavage. This chain is Protein RecA, found in Chlorobaculum tepidum (strain ATCC 49652 / DSM 12025 / NBRC 103806 / TLS) (Chlorobium tepidum).